The chain runs to 1027 residues: Fibril-forming collagen alpha chain (1027 aa).

Positions 1–12 are nonhelical region (N-terminal); that stretch reads YRAGPRYIQAQV. Residues 1 to 1027 form a disordered region; it reads YRAGPRYIQA…GPPGNSDYGA (1027 aa). A triple-helical region region spans residues 13-1023; the sequence is GPIGPRGPPG…PGPPGPPGNS (1011 aa). Residues 17 to 26 show a composition bias toward pro residues; sequence PRGPPGPPGS. A 4-hydroxyproline; partial mark is found at Pro-21 and Pro-24. 4-hydroxyproline occurs at positions 27 and 39. Pro-53 is modified (3-hydroxyproline; partial). Residue Pro-54 is modified to 4-hydroxyproline. A compositionally biased stretch (basic and acidic residues) spans 63 to 72; the sequence is SGDDGRDGEP. The residue at position 72 (Pro-72) is a 4-hydroxyproline; partial. Residues 73–91 show a composition bias toward gly residues; it reads GPRGGIGPMGPRGAGGMPG. 4-hydroxyproline occurs at positions 90 and 93. Lys-96 and Lys-108 each carry 5-hydroxylysine. O-linked (Gal...) hydroxylysine glycans are attached at residues Lys-96 and Lys-108. Pro-123 and Pro-128 each carry 4-hydroxyproline; partial. Residue Pro-150 is modified to 4-hydroxyproline. Pro-161 is subject to 3-hydroxyproline; partial. Residue Pro-162 is modified to 4-hydroxyproline. Position 164 is a 3-hydroxyproline; partial (Pro-164). Pro-165, Pro-174, Pro-177, and Pro-180 each carry 4-hydroxyproline. Over residues 168 to 182 the composition is skewed to low complexity; it reads IGSTGSPGFPGTPGS. 5-hydroxylysine occurs at positions 183 and 192. Lys-192 is a glycosylation site (O-linked (Gal...) hydroxylysine). 5 positions are modified to 4-hydroxyproline: Pro-207, Pro-216, Pro-219, Pro-228, and Pro-237. Residues 227–249 show a composition bias toward low complexity; that stretch reads EPGASGESGLPGPSGFPGPRGMP. Pro-243 carries the 4-hydroxyproline; partial modification. 2 positions are modified to 4-hydroxyproline: Pro-249 and Pro-255. Gly residues predominate over residues 259–268; that stretch reads GAKGDGGPTG. Lys-261 bears the 5-hydroxylysine mark. Lys-261 carries an O-linked (Gal...) hydroxylysine glycan. A 4-hydroxyproline; partial mark is found at Pro-273 and Pro-276. Position 279 is a 5-hydroxylysine (Lys-279). O-linked (Gal...) hydroxylysine glycosylation occurs at Lys-279. Residues Pro-285, Pro-291, and Pro-303 each carry the 4-hydroxyproline; partial modification. A 4-hydroxyproline mark is found at Pro-306, Pro-312, Pro-321, Pro-327, and Pro-339. Residue Lys-342 is modified to 5-hydroxylysine. Pro-348 carries the 4-hydroxyproline; partial modification. Lys-351 is subject to 5-hydroxylysine; partial. 4-hydroxyproline occurs at positions 366, 372, and 375. A compositionally biased stretch (basic and acidic residues) spans 380–396; it reads RPGKDGRPGIRGKDGKQ. The residue at position 381 (Pro-381) is a 4-hydroxyproline; partial. 4-hydroxyproline is present on Pro-387. Positions 398–420 are enriched in low complexity; that stretch reads EQGPQGPQGLAGLQGRAGPPGAR. The residue at position 416 (Pro-416) is a 3-hydroxyproline; partial. Pro-417, Pro-423, Pro-429, and Pro-432 each carry 4-hydroxyproline. The segment covering 437-446 has biased composition (basic and acidic residues); it reads EQGDAGKDGE. A compositionally biased stretch (low complexity) spans 447–480; the sequence is TGAAGPPGAAGPTGARGPPGPRGQQGFQGLAGAQ. 4-hydroxyproline is present on residues Pro-453, Pro-465, and Pro-483. 4-hydroxyproline; partial occurs at positions 500, 503, and 506. Residues 502–511 are compositionally biased toward gly residues; it reads GPAGPGGERG. 4-hydroxyproline is present on residues Pro-513 and Pro-525. Over residues 527–543 the composition is skewed to low complexity; that stretch reads ERGATGPAGPTGSPGVA. 2 positions are modified to 4-hydroxyproline; partial: Pro-533 and Pro-536. At Pro-540 the chain carries 4-hydroxyproline. The residue at position 546 (Lys-546) is a 5-hydroxylysine. Residue Pro-551 is modified to 3-hydroxyproline; partial. 2 positions are modified to 4-hydroxyproline: Pro-552 and Pro-561. Residues Lys-567 and Lys-573 each carry the 5-hydroxylysine modification. The O-linked (Gal...) hydroxylysine glycan is linked to Lys-573. Residues 575 to 599 show a composition bias toward basic and acidic residues; sequence SRGDIGPRGKAGERGKDGERGERGE. Position 603 is a 4-hydroxyproline (Pro-603). Lys-612 bears the 5-hydroxylysine mark. Lys-612 is a glycosylation site (O-linked (Gal...) hydroxylysine). The residue at position 621 (Pro-621) is a 4-hydroxyproline; partial. Pro-627 carries the post-translational modification 4-hydroxyproline. The span at 635–644 shows a compositional bias: low complexity; that stretch reads PAGSQGIQGQ. Position 645 is a 4-hydroxyproline; partial (Pro-645). At Pro-647 the chain carries 3-hydroxyproline; partial. A 4-hydroxyproline modification is found at Pro-648. Lys-657 is modified (5-hydroxylysine). Lys-657 carries an O-linked (Gal...) hydroxylysine glycan. A 4-hydroxyproline mark is found at Pro-663, Pro-708, Pro-711, Pro-714, Pro-717, and Pro-723. Residues 698 to 710 show a composition bias toward low complexity; the sequence is ETGAQGEIGLPGS. A compositionally biased stretch (pro residues) spans 714–726; that stretch reads PGLPGPSGQPGPS. Lys-738 is modified (5-hydroxylysine). Residue Lys-738 is glycosylated (O-linked (Gal...) hydroxylysine). Pro-744 and Pro-759 each carry 4-hydroxyproline. Basic and acidic residues predominate over residues 750 to 771; that stretch reads QGDRGSDGEPGRDGTKGERGED. Residue Lys-765 is modified to 5-hydroxylysine. Residue Lys-765 is glycosylated (O-linked (Gal...) hydroxylysine). Position 773 is a 3-hydroxyproline; partial (Pro-773). Residues Pro-774, Pro-783, and Pro-792 each carry the 4-hydroxyproline modification. Residues 802–814 show a composition bias toward gly residues; sequence GPMGGQGMKGDGG. Lys-810 carries the post-translational modification 5-hydroxylysine. Lys-810 carries O-linked (Gal...) hydroxylysine glycosylation. Pro-815 is modified (3-hydroxyproline; partial). 10 positions are modified to 4-hydroxyproline: Pro-816, Pro-843, Pro-849, Pro-855, Pro-861, Pro-867, Pro-888, Pro-894, Pro-903, and Pro-915. The segment covering 828–848 has biased composition (low complexity); that stretch reads AGPQGPTGPSGQAGAPGQEGA. Residues 884–894 are compositionally biased toward low complexity; the sequence is QRGLPGAAGPP. The segment covering 911-927 has biased composition (low complexity); that stretch reads PVGAPGSQGPAGIMGMK. Lys-927 carries the 5-hydroxylysine modification. Lys-927 carries O-linked (Gal...) hydroxylysine glycosylation. A 5-hydroxylysine; partial modification is found at Lys-933. 2 positions are modified to 5-hydroxylysine: Lys-936 and Lys-939. O-linked (Gal...) hydroxylysine glycosylation is present at Lys-936. Positions 942–962 are enriched in low complexity; the sequence is TGLPGLQGLQGTPGHSGESGP. Pro-945 is subject to 4-hydroxyproline. 4-hydroxyproline; partial is present on Pro-954. Residues Pro-963 and Pro-966 each carry the 4-hydroxyproline modification. Positions 973–982 are enriched in gly residues; sequence GEAGGRGSQG. Residues 983–1001 are compositionally biased toward low complexity; the sequence is PPGKDGQPGPSGRVGPRGP. 2 positions are modified to 4-hydroxyproline: Pro-984 and Pro-990. Pro-1010 carries the post-translational modification 3-hydroxyproline; partial. The span at 1010–1020 shows a compositional bias: pro residues; sequence PPGPPGPPGPP. Pro-1011 carries the 4-hydroxyproline modification. Pro-1013 carries the post-translational modification 3-hydroxyproline; partial. 4-hydroxyproline is present on Pro-1014. Residue Pro-1016 is modified to 3-hydroxyproline; partial. Pro-1017 carries the post-translational modification 4-hydroxyproline. 3-hydroxyproline; partial is present on Pro-1019. The residue at position 1020 (Pro-1020) is a 4-hydroxyproline. The tract at residues 1024 to 1027 is nonhelical region (C-terminal); sequence DYGA.

Homotetramer.

The protein resides in the secreted. The protein localises to the extracellular space. It localises to the extracellular matrix. Functionally, fibril-forming collagen. This is Fibril-forming collagen alpha chain from Riftia pachyptila (Vent tube worm).